We begin with the raw amino-acid sequence, 362 residues long: 3-dehydroquinate synthase (362 aa).

Residues 74 to 79 (DGEGYK), 108 to 112 (GVIGD), 132 to 133 (TT), Lys145, Lys154, and 172 to 175 (TLDT) each bind NAD(+). Positions 187, 250, and 267 each coordinate Zn(2+).

This sequence belongs to the sugar phosphate cyclases superfamily. Dehydroquinate synthase family. Requires Co(2+) as cofactor. Zn(2+) is required as a cofactor. It depends on NAD(+) as a cofactor.

The protein localises to the cytoplasm. It carries out the reaction 7-phospho-2-dehydro-3-deoxy-D-arabino-heptonate = 3-dehydroquinate + phosphate. It participates in metabolic intermediate biosynthesis; chorismate biosynthesis; chorismate from D-erythrose 4-phosphate and phosphoenolpyruvate: step 2/7. Functionally, catalyzes the conversion of 3-deoxy-D-arabino-heptulosonate 7-phosphate (DAHP) to dehydroquinate (DHQ). This Citrifermentans bemidjiense (strain ATCC BAA-1014 / DSM 16622 / JCM 12645 / Bem) (Geobacter bemidjiensis) protein is 3-dehydroquinate synthase.